We begin with the raw amino-acid sequence, 302 residues long: Sulfate adenylyltransferase subunit 2 (302 aa).

Belongs to the PAPS reductase family. CysD subfamily. As to quaternary structure, heterodimer composed of CysD, the smaller subunit, and CysN.

The catalysed reaction is sulfate + ATP + H(+) = adenosine 5'-phosphosulfate + diphosphate. The protein operates within sulfur metabolism; hydrogen sulfide biosynthesis; sulfite from sulfate: step 1/3. Its function is as follows. With CysN forms the ATP sulfurylase (ATPS) that catalyzes the adenylation of sulfate producing adenosine 5'-phosphosulfate (APS) and diphosphate, the first enzymatic step in sulfur assimilation pathway. APS synthesis involves the formation of a high-energy phosphoric-sulfuric acid anhydride bond driven by GTP hydrolysis by CysN coupled to ATP hydrolysis by CysD. In Xanthomonas euvesicatoria pv. vesicatoria (strain 85-10) (Xanthomonas campestris pv. vesicatoria), this protein is Sulfate adenylyltransferase subunit 2.